A 569-amino-acid chain; its full sequence is Arylsulfatase I (569 aa).

Positions 1–23 are cleaved as a signal peptide; sequence MHTLTGFSLVSLLSFGYLSWDWA. Positions 55, 56, and 93 each coordinate Ca(2+). The active-site Nucleophile is cysteine 93. Position 93 is a 3-oxoalanine (Cys) (cysteine 93). Lysine 147 is a binding site for substrate. Histidine 149 is a catalytic residue. Histidine 239 serves as a coordination point for substrate. N-linked (GlcNAc...) asparagine glycans are attached at residues asparagine 276 and asparagine 288. Residues aspartate 297 and asparagine 298 each coordinate Ca(2+). Position 315 (lysine 315) interacts with substrate. N-linked (GlcNAc...) asparagine glycosylation is found at asparagine 466 and asparagine 496. The interval 510–539 is disordered; the sequence is RAHPDFNGGAWGPWASDEEEEEEEGRARSF.

Belongs to the sulfatase family. The cofactor is Ca(2+). The oxidation of Cys-93 residue to 3-oxoalanine (also known as C(alpha)-formylglycine) by SUMF1/Sulfatase-modifying factor 1, seems critical for catalytic activity. Expressed in placenta, in embryonic stem cells, fetal eyes and lens.

The protein resides in the secreted. It is found in the endoplasmic reticulum. In terms of biological role, displays arylsulfatase activity at neutral pH, when co-expressed with SUMF1; arylsulfatase activity is measured in the secretion medium of retinal cell line, but no activity is recorded when measured in cell extracts. Lacks arylsulfatase activity. The protein is Arylsulfatase I (ARSI) of Homo sapiens (Human).